Consider the following 63-residue polypeptide: Small ribosomal subunit protein bS21 (63 aa).

It belongs to the bacterial ribosomal protein bS21 family.

This is Small ribosomal subunit protein bS21 from Azobacteroides pseudotrichonymphae genomovar. CFP2.